A 462-amino-acid polypeptide reads, in one-letter code: Na(+)/H(+) antiporter NhaA 2 (462 aa).

The interval Met-1–Leu-31 is disordered. Residues Pro-16 to Gly-27 show a composition bias toward pro residues. The next 11 membrane-spanning stretches (helical) occupy residues Ile-52 to Trp-72, Leu-96 to Leu-116, Leu-134 to Val-154, Gly-165 to Ser-185, Phe-195 to Tyr-215, Thr-218 to Val-238, Ser-244 to Ile-264, Phe-309 to Leu-329, Val-337 to Thr-357, Leu-382 to Gly-402, and His-408 to Leu-428.

It belongs to the NhaA Na(+)/H(+) (TC 2.A.33) antiporter family.

The protein localises to the cell membrane. It carries out the reaction Na(+)(in) + 2 H(+)(out) = Na(+)(out) + 2 H(+)(in). Its function is as follows. Na(+)/H(+) antiporter that extrudes sodium in exchange for external protons. This chain is Na(+)/H(+) antiporter NhaA 2, found in Kineococcus radiotolerans (strain ATCC BAA-149 / DSM 14245 / SRS30216).